Reading from the N-terminus, the 917-residue chain is Spermatogenesis-associated protein 31D4 (917 aa).

A helical membrane pass occupies residues 29–49; sequence FICLSGLGLFILYLFYMVLTL. 3 disordered regions span residues 55 to 80, 152 to 195, and 773 to 798; these read EKNN…KDRK, SVSP…PPPL, and SQET…RSNS. Over residues 63–74 the composition is skewed to basic residues; sequence HQGRARRKRKSV. Low complexity predominate over residues 152-163; sequence SVSPLASSASGA. Over residues 164–177 the composition is skewed to polar residues; it reads ESSFTLASTPSATT. The segment covering 782 to 798 has biased composition (basic and acidic residues); the sequence is LLHDPETSSDEDLRSNS.

Belongs to the SPATA31 family.

It localises to the membrane. May play a role in spermatogenesis. The polypeptide is Spermatogenesis-associated protein 31D4 (SPATA31D4) (Homo sapiens (Human)).